Consider the following 186-residue polypeptide: Ribosome-recycling factor (186 aa).

This sequence belongs to the RRF family.

The protein localises to the cytoplasm. Responsible for the release of ribosomes from messenger RNA at the termination of protein biosynthesis. May increase the efficiency of translation by recycling ribosomes from one round of translation to another. This is Ribosome-recycling factor from Rhizobium leguminosarum bv. trifolii (strain WSM2304).